The following is a 263-amino-acid chain: HTH-type transcriptional repressor NanR (263 aa).

Residues 1-23 form a disordered region; the sequence is MSPMNAFDPQAEDSTTTIGRNLR. Residues 30 to 98 form the HTH gntR-type domain; that stretch reads KKLSEMVEEE…NGERARVSRP (69 aa). Positions 58 to 77 form a DNA-binding region, H-T-H motif; the sequence is ERELMAFFNVGRPSVREALA.

It belongs to the NanR family.

In terms of biological role, transcriptional repressor that controls expression of the genes required for the catabolism of sialic acids. The polypeptide is HTH-type transcriptional repressor NanR (Escherichia coli O45:K1 (strain S88 / ExPEC)).